Here is a 264-residue protein sequence, read N- to C-terminus: MIEVSGLSVRLSGKSIISDVTFAAKAGELTAIAGPNGSGKTTTMKAISGELAYDGSVRIGGDEVKGLKPWQLAAVRGVLPQASTISFPFTVREIVRMGLTSGLNLHPDKSDQAAAAALASVDLVGFEGRFYQELSGGEQQRVQLARVLCQISEPIVDGKPCWLLLDEPVSSLDISHQLTIMTLARNFCKRGGGVIAVMHDLNLTALFADRVVLIKSGRLAAAGSIEEVLTDATMLSVFGCALRINQIPADGTPFVLAHSALSCP.

Residues 2–241 (IEVSGLSVRL…ATMLSVFGCA (240 aa)) enclose the ABC transporter domain. ATP is bound at residue 34-41 (GPNGSGKT).

This sequence belongs to the ABC transporter superfamily. Heme (hemin) importer (TC 3.A.1.14.5) family. As to quaternary structure, the complex is composed of two ATP-binding proteins (HmuV), two transmembrane proteins (HmuU) and a solute-binding protein (HmuT).

The protein localises to the cell inner membrane. Functionally, part of the ABC transporter complex HmuTUV involved in hemin import. Responsible for energy coupling to the transport system. The protein is Hemin import ATP-binding protein HmuV of Rhizobium etli (strain ATCC 51251 / DSM 11541 / JCM 21823 / NBRC 15573 / CFN 42).